The primary structure comprises 417 residues: Serine hydroxymethyltransferase (417 aa).

(6S)-5,6,7,8-tetrahydrofolate-binding positions include Leu122 and 126-128 (GHL). Lys230 is modified (N6-(pyridoxal phosphate)lysine). Residue 355–357 (SPF) participates in (6S)-5,6,7,8-tetrahydrofolate binding.

This sequence belongs to the SHMT family. Homodimer. Pyridoxal 5'-phosphate serves as cofactor.

It localises to the cytoplasm. It catalyses the reaction (6R)-5,10-methylene-5,6,7,8-tetrahydrofolate + glycine + H2O = (6S)-5,6,7,8-tetrahydrofolate + L-serine. It functions in the pathway one-carbon metabolism; tetrahydrofolate interconversion. Its pathway is amino-acid biosynthesis; glycine biosynthesis; glycine from L-serine: step 1/1. Functionally, catalyzes the reversible interconversion of serine and glycine with tetrahydrofolate (THF) serving as the one-carbon carrier. This reaction serves as the major source of one-carbon groups required for the biosynthesis of purines, thymidylate, methionine, and other important biomolecules. Also exhibits THF-independent aldolase activity toward beta-hydroxyamino acids, producing glycine and aldehydes, via a retro-aldol mechanism. This Francisella tularensis subsp. tularensis (strain FSC 198) protein is Serine hydroxymethyltransferase.